The following is a 600-amino-acid chain: Aspartate--tRNA(Asp/Asn) ligase (600 aa).

Residue Glu174 participates in L-aspartate binding. Positions Gln198 to Lys201 are aspartate. An L-aspartate-binding site is contributed by Arg220. Residues Arg220 to Glu222 and Gln229 each bind ATP. L-aspartate is bound at residue His457. Glu491 is a binding site for ATP. Arg498 provides a ligand contact to L-aspartate. Gly543–Arg546 contacts ATP.

Belongs to the class-II aminoacyl-tRNA synthetase family. Type 1 subfamily. Homodimer.

It localises to the cytoplasm. It carries out the reaction tRNA(Asx) + L-aspartate + ATP = L-aspartyl-tRNA(Asx) + AMP + diphosphate. Aspartyl-tRNA synthetase with relaxed tRNA specificity since it is able to aspartylate not only its cognate tRNA(Asp) but also tRNA(Asn). Reaction proceeds in two steps: L-aspartate is first activated by ATP to form Asp-AMP and then transferred to the acceptor end of tRNA(Asp/Asn). The protein is Aspartate--tRNA(Asp/Asn) ligase of Burkholderia mallei (strain NCTC 10247).